Here is a 230-residue protein sequence, read N- to C-terminus: uncharacterized protein (230 aa).

The protein to E.coli HemX N-terminal region.

This is an uncharacterized protein from Haemophilus influenzae (strain ATCC 51907 / DSM 11121 / KW20 / Rd).